The chain runs to 539 residues: Eukaryotic translation initiation factor 3 subunit L (539 aa).

The PCI domain occupies 306–514; it reads TFSDILLYVQ…IHIADTKVSH (209 aa).

This sequence belongs to the eIF-3 subunit L family. Component of the eukaryotic translation initiation factor 3 (eIF-3) complex. The eIF-3 complex interacts with pix.

The protein localises to the cytoplasm. Its function is as follows. Component of the eukaryotic translation initiation factor 3 (eIF-3) complex, which is involved in protein synthesis of a specialized repertoire of mRNAs and, together with other initiation factors, stimulates binding of mRNA and methionyl-tRNAi to the 40S ribosome. The eIF-3 complex specifically targets and initiates translation of a subset of mRNAs involved in cell proliferation. The polypeptide is Eukaryotic translation initiation factor 3 subunit L (Drosophila willistoni (Fruit fly)).